Consider the following 451-residue polypeptide: Speckle-type POZ protein homolog (451 aa).

The interval 51-75 (EVVSSGSGNSAHGRSISPSPSSASH) is disordered. A compositionally biased stretch (low complexity) spans 60-75 (SAHGRSISPSPSSASH). Residues 95–225 (KFNYMWTINN…GDRLSIFCEV (131 aa)) form the MATH domain. The BTB domain maps to 265-338 (SDFTLVCKSD…MYTGQTKYIE (74 aa)).

The protein belongs to the Tdpoz family.

It is found in the nucleus. The protein localises to the nucleus speckle. The protein operates within protein modification; protein ubiquitination. Functionally, mediates ubiquitination and proteasomal degradation of target proteins, most likely in complex with cul-3. May promote the degradation of bromodomain-containing proteins such as bet-1. The chain is Speckle-type POZ protein homolog from Caenorhabditis elegans.